The primary structure comprises 336 residues: Phosphate acyltransferase (336 aa).

It belongs to the PlsX family. Homodimer. Probably interacts with PlsY.

The protein resides in the cytoplasm. The enzyme catalyses a fatty acyl-[ACP] + phosphate = an acyl phosphate + holo-[ACP]. Its pathway is lipid metabolism; phospholipid metabolism. Catalyzes the reversible formation of acyl-phosphate (acyl-PO(4)) from acyl-[acyl-carrier-protein] (acyl-ACP). This enzyme utilizes acyl-ACP as fatty acyl donor, but not acyl-CoA. The polypeptide is Phosphate acyltransferase (Dictyoglomus thermophilum (strain ATCC 35947 / DSM 3960 / H-6-12)).